We begin with the raw amino-acid sequence, 417 residues long: Carboxypeptidase A2 (417 aa).

The signal sequence occupies residues 1–16 (MRLTPLLVALFGYIYC). Residues 17 to 112 (QETFVGDQVL…EMLFNQQRER (96 aa)) constitute a propeptide, activation peptide. One can recognise a Peptidase M14 domain in the interval 120 to 412 (AYHTLEEIYQ…LGLKTIMEHV (293 aa)). Positions 177 and 180 each coordinate Zn(2+). Substrate contacts are provided by residues 177–180 (HARE), arginine 235, and 252–253 (NR). A disulfide bridge connects residues cysteine 246 and cysteine 269. Zn(2+) is bound at residue histidine 304. 305 to 306 (SY) is a substrate binding site. Residues cysteine 318 and cysteine 352 are joined by a disulfide bond. Residue tyrosine 356 participates in substrate binding. The active-site Proton donor/acceptor is glutamate 378.

This sequence belongs to the peptidase M14 family. Zn(2+) serves as cofactor.

It localises to the secreted. It catalyses the reaction Similar to that of carboxypeptidase A (EC 3.4.17.1), but with a preference for bulkier C-terminal residues.. Functionally, carboxypeptidase that catalyzes the release of a C-terminal amino acid, with a preference for large aromatic C-terminal residues. The polypeptide is Carboxypeptidase A2 (Cpa2) (Mus musculus (Mouse)).